A 665-amino-acid chain; its full sequence is Probable potassium transport system protein Kup (665 aa).

The segment covering 1-18 (MASEAPHASAPDCAPASS) has biased composition (low complexity). Residues 1–31 (MASEAPHASAPDCAPASSDIPQQDGGSTNGH) form a disordered region. 12 consecutive transmembrane segments (helical) span residues 40–60 (FFAL…TSPL), 83–103 (VVSL…VVFI), 131–151 (LVFV…VITP), 171–191 (GVTN…LFFI), 202–222 (LFGP…LMNL), 245–265 (GLTG…VEAL), 281–301 (WLFF…AFAL), 332–352 (LVLL…TGAF), 380–400 (IFVP…MFTF), 409–429 (AYGL…FIVM), 435–455 (WSMP…ITFL), and 462–482 (FFSG…IMAT).

Belongs to the HAK/KUP transporter (TC 2.A.72) family.

Its subcellular location is the cell inner membrane. It catalyses the reaction K(+)(in) + H(+)(in) = K(+)(out) + H(+)(out). Transport of potassium into the cell. Likely operates as a K(+):H(+) symporter. The sequence is that of Probable potassium transport system protein Kup from Caulobacter vibrioides (strain ATCC 19089 / CIP 103742 / CB 15) (Caulobacter crescentus).